Reading from the N-terminus, the 338-residue chain is Anthranilate phosphoribosyltransferase (338 aa).

5-phospho-alpha-D-ribose 1-diphosphate contacts are provided by residues Gly81, 84–85 (GD), Thr89, 91–94 (NIST), 109–117 (KHGNRNLSS), and Ala121. Gly81 lines the anthranilate pocket. Ser93 contacts Mg(2+). Residue Asn112 participates in anthranilate binding. Arg167 is a binding site for anthranilate. Residues Asp226 and Glu227 each contribute to the Mg(2+) site.

Belongs to the anthranilate phosphoribosyltransferase family. Homodimer. Requires Mg(2+) as cofactor.

It catalyses the reaction N-(5-phospho-beta-D-ribosyl)anthranilate + diphosphate = 5-phospho-alpha-D-ribose 1-diphosphate + anthranilate. It participates in amino-acid biosynthesis; L-tryptophan biosynthesis; L-tryptophan from chorismate: step 2/5. Catalyzes the transfer of the phosphoribosyl group of 5-phosphorylribose-1-pyrophosphate (PRPP) to anthranilate to yield N-(5'-phosphoribosyl)-anthranilate (PRA). This is Anthranilate phosphoribosyltransferase from Cereibacter sphaeroides (strain ATCC 17029 / ATH 2.4.9) (Rhodobacter sphaeroides).